Consider the following 350-residue polypeptide: Peroxidase 10 (350 aa).

A signal peptide spans 1–27 (MDHKMSMYLFVSYLAIFTLFFKGFVSS). Intrachain disulfides connect cysteine 57/cysteine 137, cysteine 90/cysteine 95, cysteine 143/cysteine 346, and cysteine 222/cysteine 256. Residue histidine 88 is the Proton acceptor of the active site. Residues aspartate 89, valine 92, glycine 94, aspartate 96, and serine 98 each contribute to the Ca(2+) site. Residue asparagine 102 is glycosylated (N-linked (GlcNAc...) asparagine). Proline 185 is a substrate binding site. Residue asparagine 193 is glycosylated (N-linked (GlcNAc...) asparagine). A heme b-binding site is contributed by histidine 215. Threonine 216 is a binding site for Ca(2+). The Ca(2+) site is built by aspartate 270, serine 273, and aspartate 278.

It belongs to the peroxidase family. Classical plant (class III) peroxidase subfamily. Heme b serves as cofactor. Requires Ca(2+) as cofactor. Expressed in the whole plant, with the highest expression in roots.

Its subcellular location is the secreted. The catalysed reaction is 2 a phenolic donor + H2O2 = 2 a phenolic radical donor + 2 H2O. Functionally, removal of H(2)O(2), oxidation of toxic reductants, biosynthesis and degradation of lignin, suberization, auxin catabolism, response to environmental stresses such as wounding, pathogen attack and oxidative stress. These functions might be dependent on each isozyme/isoform in each plant tissue. This chain is Peroxidase 10 (PER10), found in Arabidopsis thaliana (Mouse-ear cress).